The primary structure comprises 86 residues: Conotoxin Lt15a (86 aa).

A signal peptide spans 1-23 (MEKLTILILVATVLLAIQVLVQS). Positions 24-49 (DGENPVKGRVKHYAAKRFSALFRGPR) are excised as a propeptide.

Belongs to the conotoxin O2 superfamily. Post-translationally, contains 4 disulfide bonds. In terms of tissue distribution, expressed by the venom duct.

It localises to the secreted. The sequence is that of Conotoxin Lt15a from Conus litteratus (Lettered cone).